The primary structure comprises 294 residues: NAD kinase (294 aa).

Catalysis depends on aspartate 72, which acts as the Proton acceptor. NAD(+) is bound by residues 72–73, 146–147, arginine 157, arginine 174, aspartate 176, 187–192, and glutamine 247; these read DG, ND, and TAYSLS.

This sequence belongs to the NAD kinase family. The cofactor is a divalent metal cation.

The protein localises to the cytoplasm. The catalysed reaction is NAD(+) + ATP = ADP + NADP(+) + H(+). In terms of biological role, involved in the regulation of the intracellular balance of NAD and NADP, and is a key enzyme in the biosynthesis of NADP. Catalyzes specifically the phosphorylation on 2'-hydroxyl of the adenosine moiety of NAD to yield NADP. The polypeptide is NAD kinase (Marinobacter nauticus (strain ATCC 700491 / DSM 11845 / VT8) (Marinobacter aquaeolei)).